The chain runs to 120 residues: Large ribosomal subunit protein uL18 (120 aa).

The protein belongs to the universal ribosomal protein uL18 family. As to quaternary structure, part of the 50S ribosomal subunit; part of the 5S rRNA/L5/L18/L25 subcomplex. Contacts the 5S and 23S rRNAs.

Its function is as follows. This is one of the proteins that bind and probably mediate the attachment of the 5S RNA into the large ribosomal subunit, where it forms part of the central protuberance. This is Large ribosomal subunit protein uL18 from Picosynechococcus sp. (strain ATCC 27264 / PCC 7002 / PR-6) (Agmenellum quadruplicatum).